The chain runs to 275 residues: 3-methyl-2-oxobutanoate hydroxymethyltransferase (275 aa).

Mg(2+) is bound by residues D49 and D88. 3-methyl-2-oxobutanoate-binding positions include 49-50 (DS), D88, and K118. Residue E120 coordinates Mg(2+). The Proton acceptor role is filled by E187.

It belongs to the PanB family. Homodecamer; pentamer of dimers. Requires Mg(2+) as cofactor.

Its subcellular location is the cytoplasm. It catalyses the reaction 3-methyl-2-oxobutanoate + (6R)-5,10-methylene-5,6,7,8-tetrahydrofolate + H2O = 2-dehydropantoate + (6S)-5,6,7,8-tetrahydrofolate. Its pathway is cofactor biosynthesis; (R)-pantothenate biosynthesis; (R)-pantoate from 3-methyl-2-oxobutanoate: step 1/2. Functionally, catalyzes the reversible reaction in which hydroxymethyl group from 5,10-methylenetetrahydrofolate is transferred onto alpha-ketoisovalerate to form ketopantoate. The protein is 3-methyl-2-oxobutanoate hydroxymethyltransferase of Bordetella petrii (strain ATCC BAA-461 / DSM 12804 / CCUG 43448).